A 437-amino-acid polypeptide reads, in one-letter code: Serine--tRNA ligase (437 aa).

244-246 contributes to the L-serine binding site; it reads TAE. 275–277 lines the ATP pocket; it reads RSE. E298 is an L-serine binding site. 362–365 provides a ligand contact to ATP; that stretch reads EISS. Residue S397 coordinates L-serine.

It belongs to the class-II aminoacyl-tRNA synthetase family. Type-1 seryl-tRNA synthetase subfamily. As to quaternary structure, homodimer. The tRNA molecule binds across the dimer.

Its subcellular location is the cytoplasm. It carries out the reaction tRNA(Ser) + L-serine + ATP = L-seryl-tRNA(Ser) + AMP + diphosphate + H(+). It catalyses the reaction tRNA(Sec) + L-serine + ATP = L-seryl-tRNA(Sec) + AMP + diphosphate + H(+). It functions in the pathway aminoacyl-tRNA biosynthesis; selenocysteinyl-tRNA(Sec) biosynthesis; L-seryl-tRNA(Sec) from L-serine and tRNA(Sec): step 1/1. Catalyzes the attachment of serine to tRNA(Ser). Is also able to aminoacylate tRNA(Sec) with serine, to form the misacylated tRNA L-seryl-tRNA(Sec), which will be further converted into selenocysteinyl-tRNA(Sec). This chain is Serine--tRNA ligase, found in Nitrosomonas europaea (strain ATCC 19718 / CIP 103999 / KCTC 2705 / NBRC 14298).